Reading from the N-terminus, the 139-residue chain is uncharacterized protein (139 aa).

To S.typhimurium FliF.

May be involved in the assembly, structure, or function of the flagellum. May polymerize to form a filamentous structure that is part of the flagellum. This is an uncharacterized protein from Bacillus subtilis (strain 168).